A 298-amino-acid chain; its full sequence is Protein DR_1172 (298 aa).

3 LEA-like repeats span residues 48–117 (DAAQ…NVGQ), 128–197 (DQAK…DVAQ), and 201–270 (QGAQ…AGKQ). Positions 174-193 (VQDVKADASKAADQAKDKAQ) are enriched in basic and acidic residues. A disordered region spans residues 174–298 (VQDVKADASK…MTGNTNTRKN (125 aa)). The span at 194–208 (DVAQNVKQGAQQAAS) shows a compositional bias: low complexity. Residues 209–233 (DAKDKVQDVKADASRAADQAKDKAQ) are compositionally biased toward basic and acidic residues. Low complexity predominate over residues 275–298 (GSTTNNAGTAGNTGMTGNTNTRKN).

The protein belongs to the LEA type 1 family.

The protein is Protein DR_1172 of Deinococcus radiodurans (strain ATCC 13939 / DSM 20539 / JCM 16871 / CCUG 27074 / LMG 4051 / NBRC 15346 / NCIMB 9279 / VKM B-1422 / R1).